The chain runs to 37 residues: Large ribosomal subunit protein bL36 (37 aa).

It belongs to the bacterial ribosomal protein bL36 family.

This is Large ribosomal subunit protein bL36 from Bacillus anthracis (strain A0248).